The chain runs to 226 residues: Neuromodulin (226 aa).

The interval 1 to 226 (MLCCMRRTKQ…EDPEADQEHA (226 aa)) is disordered. 2 S-palmitoyl cysteine lipidation sites follow: cysteine 3 and cysteine 4. The segment covering 9–32 (KQVEKNDEDQKIEQDGVKPEDKAH) has biased composition (basic and acidic residues). One can recognise an IQ domain in the interval 31–60 (AHKAATKIQASFRGHITRKKLKDEKKGDAP). Phosphoserine; by PHK and PKC is present on serine 41. Positions 51-84 (LKDEKKGDAPAAEAEAKEKDDAPVADGVEKKEGD) are enriched in basic and acidic residues. Residues 85–97 (GSATTDAAPATSP) are compositionally biased toward low complexity. 2 positions are modified to phosphoserine: serine 86 and serine 96. The segment covering 98-127 (KAEEPSKAGDAPSEEKKGEGDAAPSEEKAG) has biased composition (basic and acidic residues). The span at 128–139 (SAETESAAKATT) shows a compositional bias: low complexity. Serine 142, serine 144, and serine 145 each carry phosphoserine. Residues 146 to 158 (KAEDGPAKEEPKQ) show a composition bias toward basic and acidic residues. Residues 159–192 (ADVPAAVTDAAATTPAAEDAAKAAQPPTETAESS) are compositionally biased toward low complexity. Position 172 is a phosphothreonine (threonine 172). Residues serine 191 and serine 192 each carry the phosphoserine modification. Residues 201–214 (VDEAKPKESARQDE) are compositionally biased toward basic and acidic residues. Residues 215-226 (GKEDPEADQEHA) are compositionally biased toward acidic residues.

It belongs to the neuromodulin family. As to quaternary structure, identified in a complex containing FGFR4, NCAM1, CDH2, PLCG1, FRS2, SRC, SHC1, GAP43 and CTTN. Interacts (via IQ domain) with calmodulin. Binds calmodulin with a greater affinity in the absence of Ca(2+) than in its presence. Post-translationally, phosphorylated. Phosphorylation of this protein by a protein kinase C is specifically correlated with certain forms of synaptic plasticity. In terms of processing, palmitoylated by ZDHHC3. Palmitoylation is regulated by ARF6 and is essential for plasma membrane association and axonal and dendritic filopodia induction. Deacylated by LYPLA2. Expressed in hippocampal neurons, with highest levels of expression in the CA4 and CA3 neurons and lower levels in CA1 neurons. Expressed in the dorsal root ganglion.

It is found in the cell membrane. Its subcellular location is the cell projection. The protein resides in the growth cone. It localises to the growth cone membrane. The protein localises to the synapse. It is found in the filopodium membrane. Its subcellular location is the perikaryon. The protein resides in the dendrite. It localises to the axon. The protein localises to the cytoplasm. In terms of biological role, this protein is associated with nerve growth. It is a major component of the motile 'growth cones' that form the tips of elongating axons. Plays a role in axonal and dendritic filopodia induction. In Rattus norvegicus (Rat), this protein is Neuromodulin (Gap43).